Reading from the N-terminus, the 305-residue chain is Tyrosine recombinase XerC (305 aa).

Residues 4-95 (TSIQALINKW…AVKNFYRFLE (92 aa)) form the Core-binding (CB) domain. A Tyr recombinase domain is found at 116-298 (LLPKALSEDD…SIKHLEAVYT (183 aa)). Active-site residues include Arg159, Lys182, His250, Arg253, and His276. Tyr285 (O-(3'-phospho-DNA)-tyrosine intermediate) is an active-site residue.

It belongs to the 'phage' integrase family. XerC subfamily. In terms of assembly, forms a cyclic heterotetrameric complex composed of two molecules of XerC and two molecules of XerD.

The protein localises to the cytoplasm. Its function is as follows. Site-specific tyrosine recombinase, which acts by catalyzing the cutting and rejoining of the recombining DNA molecules. The XerC-XerD complex is essential to convert dimers of the bacterial chromosome into monomers to permit their segregation at cell division. It also contributes to the segregational stability of plasmids. The protein is Tyrosine recombinase XerC of Rickettsia africae (strain ESF-5).